The primary structure comprises 443 residues: Threonine/serine transporter TdcC (443 aa).

A run of 11 helical transmembrane segments spans residues 22–42, 44–64, 97–117, 140–160, 163–183, 207–227, 261–281, 312–332, 366–386, 389–409, and 423–443; these read TTWTLGLFGTAIGAGVLFFPI, AGFGGLIPILLMLVLAYPIAF, GVVITFLYFFAICPLLWIYGV, FVALFLLLLMAFVIWFGKDLM, VMSYLVWPFIASLVLISLSLI, ILITVWLGISIMVFSFNFSPI, MLMVAVVMFFAFSCLFTLSPA, AITLEYAASIIALVAIFKSFF, ISMIFIMGSTWVVAYANPNIL, IEAMGAPIIASLLCLLPMYAI, and DNVFVTVIGLLTILNIVYKLF.

This sequence belongs to the amino acid/polyamine transporter 2 family. SdaC/TdcC subfamily.

The protein resides in the cell inner membrane. The enzyme catalyses L-threonine(in) + H(+)(in) = L-threonine(out) + H(+)(out). It carries out the reaction L-serine(in) + H(+)(in) = L-serine(out) + H(+)(out). Functionally, involved in the import of threonine and serine into the cell, with the concomitant import of a proton (symport system). This chain is Threonine/serine transporter TdcC, found in Escherichia coli O45:K1 (strain S88 / ExPEC).